Consider the following 289-residue polypeptide: Oxaloacetate decarboxylase (289 aa).

Serine 50 is a binding site for substrate. Aspartate 88 is a Mg(2+) binding site. Substrate-binding residues include arginine 159 and histidine 235.

It belongs to the isocitrate lyase/PEP mutase superfamily. Oxaloacetate decarboxylase family. In terms of assembly, homotetramer; dimer of dimers. Requires Mg(2+) as cofactor.

It carries out the reaction oxaloacetate + H(+) = pyruvate + CO2. Its function is as follows. Catalyzes the decarboxylation of oxaloacetate into pyruvate. Seems to play a role in maintaining cellular concentrations of bicarbonate and pyruvate. This Pseudomonas savastanoi pv. phaseolicola (strain 1448A / Race 6) (Pseudomonas syringae pv. phaseolicola (strain 1448A / Race 6)) protein is Oxaloacetate decarboxylase.